The following is a 179-amino-acid chain: Lebocin-1/2 (179 aa).

The first 16 residues, 1 to 16 (MYKFLVFSSVLVLFFA), serve as a signal peptide directing secretion. Positions 17 to 120 (QASCQRFIQP…QPIESHRNTR (104 aa)) are excised as a propeptide. The segment at 93-116 (NNEASIEHSHHTVDTGLDQPIESH) is disordered. Thr-135 carries an O-linked (GalNAc...) threonine glycan. The propeptide occupies 153–179 (RRHASDDQEELRQYNEHFLIPRDIFQE).

Belongs to the lebocin family. In terms of processing, O-glycosylation is important for the antibacterial activity of lebocin, O-linked glycan structure is a disaccharide (Gal-GalNAc) in case of lebocin 1 and a monosaccharide (GalNAc) in case of lebocin 2. Hemolymph. Produced in fat body.

The protein localises to the secreted. Functionally, antibacterial peptide. The polypeptide is Lebocin-1/2 (Bombyx mori (Silk moth)).